A 294-amino-acid chain; its full sequence is ATP synthase gamma chain (294 aa).

This sequence belongs to the ATPase gamma chain family. As to quaternary structure, F-type ATPases have 2 components, CF(1) - the catalytic core - and CF(0) - the membrane proton channel. CF(1) has five subunits: alpha(3), beta(3), gamma(1), delta(1), epsilon(1). CF(0) has three main subunits: a, b and c.

The protein resides in the cell inner membrane. Its function is as follows. Produces ATP from ADP in the presence of a proton gradient across the membrane. The gamma chain is believed to be important in regulating ATPase activity and the flow of protons through the CF(0) complex. The sequence is that of ATP synthase gamma chain from Paraburkholderia xenovorans (strain LB400).